Here is a 343-residue protein sequence, read N- to C-terminus: Ribosomal RNA small subunit methyltransferase C (343 aa).

Belongs to the methyltransferase superfamily. RsmC family. In terms of assembly, monomer.

It is found in the cytoplasm. It carries out the reaction guanosine(1207) in 16S rRNA + S-adenosyl-L-methionine = N(2)-methylguanosine(1207) in 16S rRNA + S-adenosyl-L-homocysteine + H(+). Its function is as follows. Specifically methylates the guanine in position 1207 of 16S rRNA in the 30S particle. This Shigella flexneri serotype 5b (strain 8401) protein is Ribosomal RNA small subunit methyltransferase C.